A 277-amino-acid polypeptide reads, in one-letter code: General transcription factor IIF subunit 2 (277 aa).

The protein belongs to the TFIIF beta subunit family. As to quaternary structure, heterodimer of an alpha and a beta subunit.

It is found in the nucleus. Its function is as follows. TFIIF is a general transcription initiation factor that binds to RNA polymerase II and helps to recruit it to the initiation complex in collaboration with TFIIB. This is General transcription factor IIF subunit 2 (TfIIFbeta) from Drosophila melanogaster (Fruit fly).